The following is a 455-amino-acid chain: Chromosomal replication initiator protein DnaA (455 aa).

A domain I, interacts with DnaA modulators region spans residues 1–73 (METSLETLWS…RDVVHEILGH (73 aa)). A domain II region spans residues 73-116 (HPVEIQIEIAQGDSNATISAPEVASPPPTASPVENTNTSQRQQA). A disordered region spans residues 92 to 116 (APEVASPPPTASPVENTNTSQRQQA). Polar residues predominate over residues 104 to 116 (PVENTNTSQRQQA). The interval 117-333 (SLNPKYVFSR…GALIRAVAYI (217 aa)) is domain III, AAA+ region. Residues G161, G163, K164, and T165 each contribute to the ATP site. Residues 334–455 (SISGLPMNVE…GDRIKLANQP (122 aa)) are domain IV, binds dsDNA.

Belongs to the DnaA family. As to quaternary structure, oligomerizes as a right-handed, spiral filament on DNA at oriC.

The protein localises to the cytoplasm. In terms of biological role, plays an essential role in the initiation and regulation of chromosomal replication. ATP-DnaA binds to the origin of replication (oriC) to initiate formation of the DNA replication initiation complex once per cell cycle. Binds the DnaA box (a 9 base pair repeat at the origin) and separates the double-stranded (ds)DNA. Forms a right-handed helical filament on oriC DNA; dsDNA binds to the exterior of the filament while single-stranded (ss)DNA is stabiized in the filament's interior. The ATP-DnaA-oriC complex binds and stabilizes one strand of the AT-rich DNA unwinding element (DUE), permitting loading of DNA polymerase. After initiation quickly degrades to an ADP-DnaA complex that is not apt for DNA replication. Binds acidic phospholipids. This is Chromosomal replication initiator protein DnaA from Acaryochloris marina (strain MBIC 11017).